The primary structure comprises 523 residues: Solute carrier family 35 member F5 (523 aa).

Helical transmembrane passes span 69-89 and 101-121; these read MALG…SSEL and FFST…FIIW. The residue at position 207 (serine 207) is a Phosphoserine. Transmembrane regions (helical) follow at residues 243–263, 268–288, 296–316, 327–347, 361–381, 395–415, 420–440, and 452–472; these read ISFF…EALS, AIVN…AAVF, FTLS…LVNL, TIGS…IVMI, MFFG…FFLL, VVLM…EFLW, FLTS…LSII, and WLFF…TLLC. Residues 252-316 enclose the EamA domain; the sequence is FLANLSYQEA…SIGGVVLVNL (65 aa).

This sequence belongs to the SLC35F solute transporter family.

It localises to the membrane. In terms of biological role, putative solute transporter. This is Solute carrier family 35 member F5 (SLC35F5) from Pongo abelii (Sumatran orangutan).